The following is a 95-amino-acid chain: Aspartyl/glutamyl-tRNA(Asn/Gln) amidotransferase subunit C (95 aa).

This sequence belongs to the GatC family. In terms of assembly, heterotrimer of A, B and C subunits.

It catalyses the reaction L-glutamyl-tRNA(Gln) + L-glutamine + ATP + H2O = L-glutaminyl-tRNA(Gln) + L-glutamate + ADP + phosphate + H(+). The catalysed reaction is L-aspartyl-tRNA(Asn) + L-glutamine + ATP + H2O = L-asparaginyl-tRNA(Asn) + L-glutamate + ADP + phosphate + 2 H(+). Its function is as follows. Allows the formation of correctly charged Asn-tRNA(Asn) or Gln-tRNA(Gln) through the transamidation of misacylated Asp-tRNA(Asn) or Glu-tRNA(Gln) in organisms which lack either or both of asparaginyl-tRNA or glutaminyl-tRNA synthetases. The reaction takes place in the presence of glutamine and ATP through an activated phospho-Asp-tRNA(Asn) or phospho-Glu-tRNA(Gln). This chain is Aspartyl/glutamyl-tRNA(Asn/Gln) amidotransferase subunit C, found in Alkalilimnicola ehrlichii (strain ATCC BAA-1101 / DSM 17681 / MLHE-1).